A 324-amino-acid polypeptide reads, in one-letter code: Dioxygenase tasH (324 aa).

The N-terminal stretch at 1 to 25 is a signal peptide; the sequence is MRSMSLWMLIGPVTGIATWASLRYA. Residues histidine 50, histidine 96, and histidine 284 each coordinate Zn(2+).

The protein belongs to the DODA-type extradiol aromatic ring-opening dioxygenase family. As to quaternary structure, monomer. Zn(2+) is required as a cofactor.

In terms of biological role, dioxygenase; part of the gene cluster that mediates the biosynthesis of the tetramic acids Sch210971 and Sch210972, potential anti-HIV fungal natural product that contain a decalin core. The PKS module of tasS together with the enoylreductase tasC catalyze the formation of the polyketide unit which is then conjugated to 4-hydroxyl-4-methyl glutamate (HMG) by the condensation domain of the tasS NRPS module. One unique structural feature of Sch210971 and Sch210972 is the tetramic acid motif proposed to be derived from the non-proteinogenic amino acid HMG, by a Dieckmann-type condensation catalyzed by the reductase domain of tasS. The aldolase tasA catalyzes the aldol condensation of 2 molecules of pyruvic acid to yield the intermediate 4-hydroxyl-4-methyl-2-oxoglutarate (HMOG), which can then be stereoselectively transaminated, may be by tasG, to form HMG. The Diels-Alderase tas3 then uses the Dieckmann product of tasS as substrate and catalyzes the Diels-Alder cycloaddition to form the decalin ring of Sch210971 and Sch210972. The protein is Dioxygenase tasH of Hapsidospora irregularis.